The following is a 786-amino-acid chain: Pentatricopeptide repeat-containing protein At2g22070 (786 aa).

16 PPR repeats span residues Ser-48 to Arg-78, Thr-79 to Arg-109, Asp-110 to Pro-144, Thr-145 to Gly-179, Asn-180 to Ser-214, Trp-215 to Arg-241, Asp-242 to Ser-276, Asp-278 to Ile-312, Ser-313 to Ile-347, Phe-350 to Arg-376, Asp-377 to Pro-411, Asn-412 to Tyr-446, Ser-447 to Glu-477, Asp-479 to Pro-513, Asp-514 to Ile-548, and Thr-550 to Glu-580. Residues Thr-585–Lys-660 form a type E motif region. A type E(+) motif region spans residues His-661–Lys-691. The segment at Lys-692–Trp-786 is type DYW motif.

Belongs to the PPR family. PCMP-H subfamily.

The polypeptide is Pentatricopeptide repeat-containing protein At2g22070 (PCMP-H41) (Arabidopsis thaliana (Mouse-ear cress)).